Here is a 593-residue protein sequence, read N- to C-terminus: Solute carrier family 40 member 3, chloroplastic (593 aa).

Positions 1–23 (MSMSKLLSPPPTSPPGPALSRLP) are disordered. A chloroplast-targeting transit peptide spans 1-51 (MSMSKLLSPPPTSPPGPALSRLPCRRVAPPPVLPFPFPLRRLTSRRVFATS). A compositionally biased stretch (pro residues) spans 8-17 (SPPPTSPPGP). Transmembrane regions (helical) follow at residues 181–201 (ILPV…AGPL), 219–239 (AAIQ…AFAV), 253–273 (FAVL…LGII), 303–322 (LLCE…KNNP), 323–343 (LTCI…LIFL), 403–423 (YVFV…TFLI), 431–451 (VIGA…FATA), 462–482 (AGAA…VVYL), 493–513 (LFAF…YSAI), 530–550 (IGAT…AVAV), and 557–577 (HFGA…GMYC).

This sequence belongs to the ferroportin (FP) (TC 2.A.100) family. SLC40A subfamily.

Its subcellular location is the membrane. It localises to the plastid. The protein resides in the chloroplast envelope. May be involved in iron transport and iron homeostasis. This chain is Solute carrier family 40 member 3, chloroplastic, found in Oryza sativa subsp. japonica (Rice).